Reading from the N-terminus, the 142-residue chain is Transcriptional regulator MraZ (142 aa).

SpoVT-AbrB domains are found at residues 5 to 51 (ASAL…PRPE) and 77 to 120 (AMDV…DSQT).

This sequence belongs to the MraZ family. Forms oligomers.

The protein localises to the cytoplasm. Its subcellular location is the nucleoid. This Burkholderia cenocepacia (strain ATCC BAA-245 / DSM 16553 / LMG 16656 / NCTC 13227 / J2315 / CF5610) (Burkholderia cepacia (strain J2315)) protein is Transcriptional regulator MraZ.